Here is a 246-residue protein sequence, read N- to C-terminus: Purine nucleoside phosphorylase ORF3 (246 aa).

Zn(2+) is bound by residues histidine 71, cysteine 110, and histidine 127.

This sequence belongs to the purine nucleoside phosphorylase YfiH/LACC1 family. Homodimer. Cu(2+) serves as cofactor. It depends on Zn(2+) as a cofactor.

The enzyme catalyses adenosine + phosphate = alpha-D-ribose 1-phosphate + adenine. It catalyses the reaction S-methyl-5'-thioadenosine + phosphate = 5-(methylsulfanyl)-alpha-D-ribose 1-phosphate + adenine. The catalysed reaction is inosine + phosphate = alpha-D-ribose 1-phosphate + hypoxanthine. It carries out the reaction adenosine + H2O + H(+) = inosine + NH4(+). Its function is as follows. Purine nucleoside enzyme that catalyzes the phosphorolysis of adenosine and inosine nucleosides, yielding D-ribose 1-phosphate and the respective free bases, adenine and hypoxanthine. Also catalyzes the phosphorolysis of S-methyl-5'-thioadenosine into adenine and S-methyl-5-thio-alpha-D-ribose 1-phosphate. Also has adenosine deaminase activity. This is Purine nucleoside phosphorylase ORF3 from Streptomyces griseus.